Reading from the N-terminus, the 167-residue chain is 6,7-dimethyl-8-ribityllumazine synthase (167 aa).

5-amino-6-(D-ribitylamino)uracil is bound by residues Phe26, 60-62 (AFE), and 89-91 (AII). 94-95 (ET) is a (2S)-2-hydroxy-3-oxobutyl phosphate binding site. His97 acts as the Proton donor in catalysis. A 5-amino-6-(D-ribitylamino)uracil-binding site is contributed by Phe122. Arg136 contributes to the (2S)-2-hydroxy-3-oxobutyl phosphate binding site.

It belongs to the DMRL synthase family. As to quaternary structure, forms an icosahedral capsid composed of 60 subunits, arranged as a dodecamer of pentamers.

The catalysed reaction is (2S)-2-hydroxy-3-oxobutyl phosphate + 5-amino-6-(D-ribitylamino)uracil = 6,7-dimethyl-8-(1-D-ribityl)lumazine + phosphate + 2 H2O + H(+). It functions in the pathway cofactor biosynthesis; riboflavin biosynthesis; riboflavin from 2-hydroxy-3-oxobutyl phosphate and 5-amino-6-(D-ribitylamino)uracil: step 1/2. Catalyzes the formation of 6,7-dimethyl-8-ribityllumazine by condensation of 5-amino-6-(D-ribitylamino)uracil with 3,4-dihydroxy-2-butanone 4-phosphate. This is the penultimate step in the biosynthesis of riboflavin. The protein is 6,7-dimethyl-8-ribityllumazine synthase of Ruthia magnifica subsp. Calyptogena magnifica.